We begin with the raw amino-acid sequence, 287 residues long: Lipoyl synthase (287 aa).

[4Fe-4S] cluster contacts are provided by C34, C39, C45, C60, C64, C67, and S273. One can recognise a Radical SAM core domain in the interval 46 to 262 (WNKRHATVMI…KYIAYSKGFL (217 aa)).

This sequence belongs to the radical SAM superfamily. Lipoyl synthase family. Requires [4Fe-4S] cluster as cofactor.

The protein localises to the cytoplasm. It catalyses the reaction [[Fe-S] cluster scaffold protein carrying a second [4Fe-4S](2+) cluster] + N(6)-octanoyl-L-lysyl-[protein] + 2 oxidized [2Fe-2S]-[ferredoxin] + 2 S-adenosyl-L-methionine + 4 H(+) = [[Fe-S] cluster scaffold protein] + N(6)-[(R)-dihydrolipoyl]-L-lysyl-[protein] + 4 Fe(3+) + 2 hydrogen sulfide + 2 5'-deoxyadenosine + 2 L-methionine + 2 reduced [2Fe-2S]-[ferredoxin]. Its pathway is protein modification; protein lipoylation via endogenous pathway; protein N(6)-(lipoyl)lysine from octanoyl-[acyl-carrier-protein]: step 2/2. Functionally, catalyzes the radical-mediated insertion of two sulfur atoms into the C-6 and C-8 positions of the octanoyl moiety bound to the lipoyl domains of lipoate-dependent enzymes, thereby converting the octanoylated domains into lipoylated derivatives. In Wolbachia sp. subsp. Brugia malayi (strain TRS), this protein is Lipoyl synthase.